A 178-amino-acid polypeptide reads, in one-letter code: ATP synthase subunit delta (178 aa).

The protein belongs to the ATPase delta chain family. F-type ATPases have 2 components, F(1) - the catalytic core - and F(0) - the membrane proton channel. F(1) has five subunits: alpha(3), beta(3), gamma(1), delta(1), epsilon(1). F(0) has three main subunits: a(1), b(2) and c(10-14). The alpha and beta chains form an alternating ring which encloses part of the gamma chain. F(1) is attached to F(0) by a central stalk formed by the gamma and epsilon chains, while a peripheral stalk is formed by the delta and b chains.

The protein resides in the cell membrane. Functionally, f(1)F(0) ATP synthase produces ATP from ADP in the presence of a proton or sodium gradient. F-type ATPases consist of two structural domains, F(1) containing the extramembraneous catalytic core and F(0) containing the membrane proton channel, linked together by a central stalk and a peripheral stalk. During catalysis, ATP synthesis in the catalytic domain of F(1) is coupled via a rotary mechanism of the central stalk subunits to proton translocation. In terms of biological role, this protein is part of the stalk that links CF(0) to CF(1). It either transmits conformational changes from CF(0) to CF(1) or is implicated in proton conduction. The polypeptide is ATP synthase subunit delta (Streptococcus mutans serotype c (strain ATCC 700610 / UA159)).